Consider the following 619-residue polypeptide: 4-hydroxyphenylalkanoate adenylyltransferase (619 aa).

This sequence belongs to the ATP-dependent AMP-binding enzyme family.

The catalysed reaction is 17-(4-hydroxyphenyl)heptadecanoate + holo-[(phenol)carboxyphthiodiolenone synthase] + ATP = 17-(4-hydroxyphenyl)heptadecanoyl-[(phenol)carboxyphthiodiolenone synthase] + AMP + diphosphate. It catalyses the reaction 19-(4-hydroxyphenyl)nonadecanoate + holo-[(phenol)carboxyphthiodiolenone synthase] + ATP = 19-(4-hydroxyphenyl)nonadecanoyl-[(phenol)carboxyphthiodiolenone synthase] + AMP + diphosphate. The enzyme catalyses dodecanoate + ATP + H(+) = dodecanoyl-AMP + diphosphate. The protein operates within lipid metabolism; fatty acid biosynthesis. Functionally, catalyzes the activation of long-chain fatty acids as acyl-adenylates (acyl-AMP), which are then transferred to the multifunctional polyketide synthase PpsA for further chain extension. Involved in the biosynthesis of phenolphthiocerol, which is an important intermediate in the biosynthesis of phenolic glycolipid (PGL), also called mycosid B. This is 4-hydroxyphenylalkanoate adenylyltransferase (fadD29) from Mycobacterium tuberculosis (strain ATCC 25618 / H37Rv).